A 97-amino-acid polypeptide reads, in one-letter code: Putative pterin-4-alpha-carbinolamine dehydratase (97 aa).

Belongs to the pterin-4-alpha-carbinolamine dehydratase family.

It carries out the reaction (4aS,6R)-4a-hydroxy-L-erythro-5,6,7,8-tetrahydrobiopterin = (6R)-L-erythro-6,7-dihydrobiopterin + H2O. The protein is Putative pterin-4-alpha-carbinolamine dehydratase of Saccharolobus solfataricus (strain ATCC 35092 / DSM 1617 / JCM 11322 / P2) (Sulfolobus solfataricus).